Consider the following 349-residue polypeptide: Probable dual-specificity RNA methyltransferase RlmN (349 aa).

Glutamate 94 functions as the Proton acceptor in the catalytic mechanism. Residues 100 to 334 (TETRTTACVS…VKVRRSRGKD (235 aa)) enclose the Radical SAM core domain. An intrachain disulfide couples cysteine 107 to cysteine 339. Positions 114, 118, and 121 each coordinate [4Fe-4S] cluster. S-adenosyl-L-methionine-binding positions include 165 to 166 (GE), serine 197, 220 to 222 (SLH), and asparagine 296. Residue cysteine 339 is the S-methylcysteine intermediate of the active site.

This sequence belongs to the radical SAM superfamily. RlmN family. It depends on [4Fe-4S] cluster as a cofactor.

It localises to the cytoplasm. It carries out the reaction adenosine(2503) in 23S rRNA + 2 reduced [2Fe-2S]-[ferredoxin] + 2 S-adenosyl-L-methionine = 2-methyladenosine(2503) in 23S rRNA + 5'-deoxyadenosine + L-methionine + 2 oxidized [2Fe-2S]-[ferredoxin] + S-adenosyl-L-homocysteine. The enzyme catalyses adenosine(37) in tRNA + 2 reduced [2Fe-2S]-[ferredoxin] + 2 S-adenosyl-L-methionine = 2-methyladenosine(37) in tRNA + 5'-deoxyadenosine + L-methionine + 2 oxidized [2Fe-2S]-[ferredoxin] + S-adenosyl-L-homocysteine. Specifically methylates position 2 of adenine 2503 in 23S rRNA and position 2 of adenine 37 in tRNAs. This Flavobacterium johnsoniae (strain ATCC 17061 / DSM 2064 / JCM 8514 / BCRC 14874 / CCUG 350202 / NBRC 14942 / NCIMB 11054 / UW101) (Cytophaga johnsonae) protein is Probable dual-specificity RNA methyltransferase RlmN.